The chain runs to 282 residues: MVPPRWGSLDSLKPQQHLPMTKKGILLAAFGSGNRQGESTLRLFDERVRERFPGVPVRWAFTSVIMRRRLAAARKKTDSVLKALQKMWFEKYTHVAVQSLHIIPGAEYGDLVADVEAMRRDDGFTAATVGAPLLAGSGDMERSAAALLAHLPAGRKPDEAVVFMGHGTRHPAESSYEALAALVRRVDPHVHIGTMGGSRTLDHILPELQQGGVKGVWLMPLLSVVGRHATEDMAGTDPESWKSRLEASGLRCIPVLRGTAEYEGFVDIWLDHLTAAVSALDD.

Catalysis depends on His166, which acts as the Proton acceptor. Co(2+) contacts are provided by His166 and His228.

It belongs to the CbiK family.

Its subcellular location is the cytoplasm. It carries out the reaction Co-sirohydrochlorin + 2 H(+) = sirohydrochlorin + Co(2+). It catalyses the reaction siroheme + 2 H(+) = sirohydrochlorin + Fe(2+). It participates in cofactor biosynthesis; adenosylcobalamin biosynthesis; cob(II)yrinate a,c-diamide from sirohydrochlorin (anaerobic route): step 1/10. It functions in the pathway porphyrin-containing compound metabolism; siroheme biosynthesis; siroheme from sirohydrochlorin: step 1/1. Functionally, catalyzes the insertion of Co(2+) into sirohydrochlorin as part of the anaerobic pathway to cobalamin biosynthesis. To a lesser extent, is also able to insert Fe(2+) into sirohydrochlorin, yielding siroheme. The polypeptide is Sirohydrochlorin cobaltochelatase CbiKC (cbiKc) (Nitratidesulfovibrio vulgaris (strain ATCC 29579 / DSM 644 / CCUG 34227 / NCIMB 8303 / VKM B-1760 / Hildenborough) (Desulfovibrio vulgaris)).